We begin with the raw amino-acid sequence, 471 residues long: UDP-N-acetylmuramoylalanine--D-glutamate ligase (471 aa).

Residue 135–141 coordinates ATP; the sequence is GTNGKTT.

This sequence belongs to the MurCDEF family.

Its subcellular location is the cytoplasm. It catalyses the reaction UDP-N-acetyl-alpha-D-muramoyl-L-alanine + D-glutamate + ATP = UDP-N-acetyl-alpha-D-muramoyl-L-alanyl-D-glutamate + ADP + phosphate + H(+). It participates in cell wall biogenesis; peptidoglycan biosynthesis. Its function is as follows. Cell wall formation. Catalyzes the addition of glutamate to the nucleotide precursor UDP-N-acetylmuramoyl-L-alanine (UMA). The sequence is that of UDP-N-acetylmuramoylalanine--D-glutamate ligase from Frankia casuarinae (strain DSM 45818 / CECT 9043 / HFP020203 / CcI3).